Here is a 794-residue protein sequence, read N- to C-terminus: Zinc finger protein 148 (794 aa).

Lys6 participates in a covalent cross-link: Glycyl lysine isopeptide (Lys-Gly) (interchain with G-Cter in SUMO2). Ser51 is subject to Phosphoserine. Residues Lys88, Lys115, and Lys132 each participate in a glycyl lysine isopeptide (Lys-Gly) (interchain with G-Cter in SUMO2) cross-link. The C2H2-type 1 zinc-finger motif lies at 171-193 (HVCEHCNAAFRTNYHLQRHVFIH). Position 194 is a phosphothreonine (Thr194). C2H2-type zinc fingers lie at residues 199–221 (FQCS…EKIH) and 227–249 (FRCD…KRTH). Ser250 is subject to Phosphoserine. The C2H2-type 4 zinc finger occupies 255–278 (YQCEYCLQYFSRTDRVLKHKRMCH). Lys291 is covalently cross-linked (Glycyl lysine isopeptide (Lys-Gly) (interchain with G-Cter in SUMO2)). Residues 298 to 336 (EEDSGFSTSPKDNSLPKKKRQKTEKKSSGMDKESVLDKS) form a disordered region. Residues Ser301 and Ser306 each carry the phosphoserine modification. A Glycyl lysine isopeptide (Lys-Gly) (interchain with G-Cter in SUMO2) cross-link involves residue Lys308. Residues 321 to 336 (EKKSSGMDKESVLDKS) are compositionally biased toward basic and acidic residues. A Glycyl lysine isopeptide (Lys-Gly) (interchain with G-Cter in SUMO1); alternate cross-link involves residue Lys356. Residue Lys356 forms a Glycyl lysine isopeptide (Lys-Gly) (interchain with G-Cter in SUMO2); alternate linkage. Lys402 participates in a covalent cross-link: Glycyl lysine isopeptide (Lys-Gly) (interchain with G-Cter in SUMO2). The residue at position 412 (Ser412) is a Phosphoserine. Residues Lys421 and Lys424 each participate in a glycyl lysine isopeptide (Lys-Gly) (interchain with G-Cter in SUMO2) cross-link. Polar residues predominate over residues 574 to 588 (NSSDVPEVTQSENVG). Positions 574–599 (NSSDVPEVTQSENVGSSSQASSSDKA) are disordered. Lys607 is modified (N6-acetyllysine). Phosphoserine is present on residues Ser665 and Ser784.

This sequence belongs to the krueppel C2H2-type zinc-finger protein family. In terms of assembly, interacts with HNRNPDL. Interacts with the 5FMC complex; the interaction requires association with CHTOP. Interacts with CAVIN1. Sumoylated with SUMO2. Desumoylated by SENP3, resulting in the stimulation of transcription of its target genes. As to expression, strong expression detected in brain, lung, liver and kidney, with lower levels detected in spleen, skeletal muscle, testis and heart.

The protein localises to the nucleus. Its function is as follows. Involved in transcriptional regulation. Represses the transcription of a number of genes including gastrin, stromelysin and enolase. Binds to the G-rich box in the enhancer region of these genes. In Mus musculus (Mouse), this protein is Zinc finger protein 148 (Znf148).